A 2500-amino-acid polypeptide reads, in one-letter code: Non-reducing polyketide synthase atr1 (2500 aa).

The N-terminal acylcarrier protein transacylase domain (SAT) stretch occupies residues 13–260; sequence VFSPQSKAPK…HNPENANLAL (248 aa). The 424-residue stretch at 385 to 808 folds into the Ketosynthase family 3 (KS3) domain; the sequence is TDAVAVVGMA…GSNSAVLLCQ (424 aa). Catalysis depends on for beta-ketoacyl synthase activity residues Cys557, His692, and His731. The interval 908–1199 is malonyl-CoA:ACP transacylase (MAT) domain; sequence MTFSGQSRQS…EFPERHTFLD (292 aa). Catalysis depends on Ser995, which acts as the For acyl/malonyl transferase activity. The N-terminal hotdog fold stretch occupies residues 1286–1413; sequence PRLVEPRTKP…GDFGFTTQTQ (128 aa). One can recognise a PKS/mFAS DH domain in the interval 1286–1584; that stretch reads PRLVEPRTKP…FTKLPITRLE (299 aa). The interval 1287-1583 is product template (PT) domain; it reads RLVEPRTKPS…QFTKLPITRL (297 aa). His1317 (proton acceptor; for dehydratase activity) is an active-site residue. The tract at residues 1433 to 1584 is C-terminal hotdog fold; it reads SETLKSKRAY…FTKLPITRLE (152 aa). Asp1495 functions as the Proton donor; for dehydratase activity in the catalytic mechanism. The tract at residues 1594–1649 is disordered; it reads AHNTPILKSSQQDSIVSASSSSSTEHSDDDSEDDGSRSPSHSDTSVDSESEAPADN. The segment covering 1602 to 1617 has biased composition (low complexity); the sequence is SSQQDSIVSASSSSST. Residues 1649–1725 form the Carrier domain; the sequence is NGAAKKLKSL…RIVAPEMAAK (77 aa). Ser1683 is subject to O-(pantetheine 4'-phosphoryl)serine. Residues 2164–2496 form a thioesterase (TE) domain region; sequence KSYRIETMPY…YEFIFDVVGR (333 aa). Active-site for thioesterase activity residues include Ser2285 and Asp2434.

It carries out the reaction 6 malonyl-CoA + 2 acetyl-CoA + 2 S-adenosyl-L-methionine + 3 H(+) = 4-O-demethylbarbatate + 2 S-adenosyl-L-homocysteine + 6 CO2 + 8 CoA + H2O. The protein operates within secondary metabolite biosynthesis; terpenoid biosynthesis. In terms of biological role, non-reducing polyketide synthase; part of the gene cluster that mediates the biosynthesis of atranorin, a depside of polyketide origin that accumulates in the cortical or medullary layers of lichen thalli. The first step in the pathway is performed by the non-reducing polyketide synthase atr1 that produces 4-O-demethylbarbatic acid composed of two 3-methylorsellinic acid (3MOA) moieties from S-adenosyl-L-methionine (SAM), acetyl-CoA and malonyl-CoA units. The pathway continues with the actions of the cytochrome P450 monooygenase atr2 that catalizes the oxidation of c-9 and the O-methyltransferase atr3 that performs the methylation of the carboxyl group to yield atranorin, via the proatranorin II and III intermediates if atr2 acts first, or the proatranorin I intermediate if atr3 acts first. The chain is Non-reducing polyketide synthase atr1 from Stereocaulon alpinum (Alpine snow lichen).